The following is a 57-amino-acid chain: Aminopeptidase A (57 aa).

At 1–57 (YLTDHYFKVDLNSTVTQQRFLLDPSELAGITIMQPSDSNIEWLKQYRDDVATWLENS) the chain is on the extracellular side. N-linked (GlcNAc...) asparagine glycosylation is present at asparagine 12.

It belongs to the peptidase M1 family. As to quaternary structure, homodimer; disulfide-linked. It depends on Zn(2+) as a cofactor.

Its subcellular location is the cell membrane. The enzyme catalyses Release of N-terminal glutamate (and to a lesser extent aspartate) from a peptide.. Inhibited by the aminopeptidase competitive inhibitors amastatin (Leu and acidic inhibitor), and bestatin (Leu inhibitor), by chelating agents EDTA, and 1,10-Phenanthroline, as well as by Zn(2+) ions. Substrate specificity is modulated by Ca(2+), Ba(2+), and Mn(2+) ions which enhances the enzymatic activity for cleavage of acidic residues. Its function is as follows. Venom protein that cleaves N-terminal acidic residues from peptides with high potency in presence of calcium. It may have several roles in venom including alteration of blood pressure by cleaving circulating angiotensin-2, general degradation of host tissue, increase of permeability to other venom components, and/or processing of other toxins in the venom. The sequence is that of Aminopeptidase A from Gloydius blomhoffii (Mamushi).